A 63-amino-acid polypeptide reads, in one-letter code: Large ribosomal subunit protein bL32 (63 aa).

Residues 1-45 are disordered; it reads MAVQQNKKSRSRRDMRRSHDALTKPTLSVDPTTGETHLRHHMTPD. Positions 7 to 16 are enriched in basic residues; that stretch reads KKSRSRRDMR. The segment covering 25–35 has biased composition (polar residues); sequence PTLSVDPTTGE.

Belongs to the bacterial ribosomal protein bL32 family.

This Legionella pneumophila (strain Paris) protein is Large ribosomal subunit protein bL32.